A 568-amino-acid chain; its full sequence is MSIKLKQRFVPQLAAMNHEFAEDFSKMLETVDTSHIKEKTVVKGQVIEIKNDIIIVDVGLKNEGRIPKSEFLALPEVGDVVEVFIEKIEGRNGRTILSREKAVKEELWGQLEIMCSKGEFVDGTIFGRVKGGFTVDLSGVVAFLPGSQVDVRPIKDPTSIMNIKQPFKILSMDKKLGNIVVSRRAILEESRSEARDEMLSKIKEGMVLEGTVKNITDYGAFIDLGSVDGLLHLTDISWGRVNHPSEVLDFNQKVKVMVIKFDEKNKRISLGIKQLDSNPWEAIKEEFPVGKQMTGKVTNFADYGVFIELKDGLEGLVHSSEISWLKSNQNPRKTLTIGQEVEFVVLEVDTEKHRVSLSIKQCQENPLTKFAENNPVGTIIKAPIRNITDFGIFVALGNNMDGMIHEGDISWEDKGTDLLKSYKKGDEIECKVLAINIEKEQVSLGIKQLSPNPYQEISDEYKKGTIVKALITEVKDEGLEVLLNDKVAGFIKRTELSDEKDEQKPEMFQIDKEIEAKVVSIEKSTGRILLSVKAHKIAERQKALKEYGSSDNTTNMGDILANALEDKK.

S1 motif domains lie at 39–100 (KTVV…LSRE), 118–184 (GEFV…VSRR), 205–273 (GMVL…LGIK), 290–360 (GKQM…LSIK), 377–447 (GTII…LGIK), and 464–533 (GTIV…LSVK).

Belongs to the bacterial ribosomal protein bS1 family.

Binds mRNA; thus facilitating recognition of the initiation point. It is needed to translate mRNA with a short Shine-Dalgarno (SD) purine-rich sequence. This chain is Small ribosomal subunit protein bS1 (rpsA), found in Rickettsia conorii (strain ATCC VR-613 / Malish 7).